The primary structure comprises 546 residues: 3-(3-hydroxy-phenyl)propionate/3-hydroxycinnamic acid hydroxylase 2 (546 aa).

Residues 10–39 (SVAIVGAGPNGAALANLLGLYGVDTVVVER) and 278–288 (FVAGRIALVGD) each bind FAD.

This sequence belongs to the PheA/TfdB FAD monooxygenase family. Requires FAD as cofactor.

The enzyme catalyses 3-(3-hydroxyphenyl)propanoate + NADH + O2 + H(+) = 3-(2,3-dihydroxyphenyl)propanoate + NAD(+) + H2O. It catalyses the reaction (2E)-3-(3-hydroxyphenyl)prop-2-enoate + NADH + O2 + H(+) = (2E)-3-(2,3-dihydroxyphenyl)prop-2-enoate + NAD(+) + H2O. The protein operates within aromatic compound metabolism; 3-phenylpropanoate degradation. Functionally, catalyzes the insertion of one atom of molecular oxygen into position 2 of the phenyl ring of 3-(3-hydroxyphenyl)propionate (3-HPP) and hydroxycinnamic acid (3HCI). The protein is 3-(3-hydroxy-phenyl)propionate/3-hydroxycinnamic acid hydroxylase 2 of Burkholderia vietnamiensis (strain G4 / LMG 22486) (Burkholderia cepacia (strain R1808)).